The primary structure comprises 361 residues: Phospho-N-acetylmuramoyl-pentapeptide-transferase (361 aa).

Helical transmembrane passes span 25–45, 72–92, 95–115, 135–155, 169–189, 200–220, 240–260, 264–284, 289–309, and 338–358; these read TGGAMVTGALFVFMFGPWIID, TPTMGGLMILSGLTVGTVLWA, LNPYVWIVLAVTLGFGFVGFY, LLIEFIIAGAACFALVWLGRA, VMLNLGWAFVVFGAFVVVGAG, GLAIVPVMIAAASFGLISYLA, LAVLCGALLGAGLGFLWFNAP, IFMGDTGSLALGGMLGSIAVA, IVLAVIGGLFVLEAVSVIVQV, and QIVIRFWIIAVMLALAGLSTL.

It belongs to the glycosyltransferase 4 family. MraY subfamily. Mg(2+) is required as a cofactor.

The protein localises to the cell inner membrane. It carries out the reaction UDP-N-acetyl-alpha-D-muramoyl-L-alanyl-gamma-D-glutamyl-meso-2,6-diaminopimeloyl-D-alanyl-D-alanine + di-trans,octa-cis-undecaprenyl phosphate = di-trans,octa-cis-undecaprenyl diphospho-N-acetyl-alpha-D-muramoyl-L-alanyl-D-glutamyl-meso-2,6-diaminopimeloyl-D-alanyl-D-alanine + UMP. The protein operates within cell wall biogenesis; peptidoglycan biosynthesis. In terms of biological role, catalyzes the initial step of the lipid cycle reactions in the biosynthesis of the cell wall peptidoglycan: transfers peptidoglycan precursor phospho-MurNAc-pentapeptide from UDP-MurNAc-pentapeptide onto the lipid carrier undecaprenyl phosphate, yielding undecaprenyl-pyrophosphoryl-MurNAc-pentapeptide, known as lipid I. The sequence is that of Phospho-N-acetylmuramoyl-pentapeptide-transferase from Rhodopseudomonas palustris (strain TIE-1).